Consider the following 366-residue polypeptide: 1-deoxy-D-xylulose 5-phosphate reductoisomerase (366 aa).

The NADPH site is built by Thr7, Gly8, Ser9, Ile10, Gly31, Asn33, and Asn111. Lys112 contributes to the 1-deoxy-D-xylulose 5-phosphate binding site. Glu113 is an NADPH binding site. Asp131 lines the Mn(2+) pocket. 1-deoxy-D-xylulose 5-phosphate is bound by residues Ser132, Glu133, Ser162, and His185. Residue Glu133 coordinates Mn(2+). Gly191 is an NADPH binding site. 1-deoxy-D-xylulose 5-phosphate-binding residues include Ser198, Asn203, Lys204, and Glu207. Position 207 (Glu207) interacts with Mn(2+).

Belongs to the DXR family. Requires Mg(2+) as cofactor. Mn(2+) serves as cofactor.

The enzyme catalyses 2-C-methyl-D-erythritol 4-phosphate + NADP(+) = 1-deoxy-D-xylulose 5-phosphate + NADPH + H(+). It participates in isoprenoid biosynthesis; isopentenyl diphosphate biosynthesis via DXP pathway; isopentenyl diphosphate from 1-deoxy-D-xylulose 5-phosphate: step 1/6. Catalyzes the NADPH-dependent rearrangement and reduction of 1-deoxy-D-xylulose-5-phosphate (DXP) to 2-C-methyl-D-erythritol 4-phosphate (MEP). This chain is 1-deoxy-D-xylulose 5-phosphate reductoisomerase, found in Nautilia profundicola (strain ATCC BAA-1463 / DSM 18972 / AmH).